The chain runs to 119 residues: Ribonuclease P protein component (119 aa).

It belongs to the RnpA family. As to quaternary structure, consists of a catalytic RNA component (M1 or rnpB) and a protein subunit.

It catalyses the reaction Endonucleolytic cleavage of RNA, removing 5'-extranucleotides from tRNA precursor.. Functionally, RNaseP catalyzes the removal of the 5'-leader sequence from pre-tRNA to produce the mature 5'-terminus. It can also cleave other RNA substrates such as 4.5S RNA. The protein component plays an auxiliary but essential role in vivo by binding to the 5'-leader sequence and broadening the substrate specificity of the ribozyme. This chain is Ribonuclease P protein component, found in Aeromonas salmonicida (strain A449).